Here is a 390-residue protein sequence, read N- to C-terminus: Alanine racemase (390 aa).

The active-site Proton acceptor; specific for D-alanine is the K37. Residue K37 is modified to N6-(pyridoxal phosphate)lysine. A substrate-binding site is contributed by R135. The Proton acceptor; specific for L-alanine role is filled by Y274. A substrate-binding site is contributed by M322.

This sequence belongs to the alanine racemase family. Pyridoxal 5'-phosphate serves as cofactor.

It carries out the reaction L-alanine = D-alanine. Its pathway is amino-acid biosynthesis; D-alanine biosynthesis; D-alanine from L-alanine: step 1/1. Catalyzes the interconversion of L-alanine and D-alanine. May also act on other amino acids. This Desulfosudis oleivorans (strain DSM 6200 / JCM 39069 / Hxd3) (Desulfococcus oleovorans) protein is Alanine racemase (alr).